We begin with the raw amino-acid sequence, 519 residues long: Histidine--tRNA ligase (519 aa).

The protein belongs to the class-II aminoacyl-tRNA synthetase family. As to quaternary structure, homodimer.

The protein localises to the cytoplasm. The enzyme catalyses tRNA(His) + L-histidine + ATP = L-histidyl-tRNA(His) + AMP + diphosphate + H(+). The chain is Histidine--tRNA ligase from Roseobacter denitrificans (strain ATCC 33942 / OCh 114) (Erythrobacter sp. (strain OCh 114)).